A 202-amino-acid polypeptide reads, in one-letter code: Dephospho-CoA kinase (202 aa).

Residues isoleucine 5–proline 202 form the DPCK domain. An ATP-binding site is contributed by glycine 13–alanine 18.

This sequence belongs to the CoaE family.

It localises to the cytoplasm. The catalysed reaction is 3'-dephospho-CoA + ATP = ADP + CoA + H(+). The protein operates within cofactor biosynthesis; coenzyme A biosynthesis; CoA from (R)-pantothenate: step 5/5. In terms of biological role, catalyzes the phosphorylation of the 3'-hydroxyl group of dephosphocoenzyme A to form coenzyme A. The chain is Dephospho-CoA kinase from Stutzerimonas stutzeri (Pseudomonas stutzeri).